The following is a 794-amino-acid chain: MVRHFKMQIFGDRQPGYDGKRNMYTAHPLPIGRDRVDMEVTLPGEGKDQTFKVSIQWVSVVSLQLLLEALAGHLNEVPEDSVQALDVITRHLPSMRYTPVGRSFFSPPEGYYHPLGGGREVWFGFHQSVRPAMWNMMLNIDVSATAFYRAQPIIEFMCEVLDIQNINEQTKPLTDSQRVKFTKEIRGLKVEVTHCGQMKRKYRVCNVTRRPASHQTFPLQLENGQAMECTVAQYFKQKYSLQLKYPHLPCLQVGQEQKHTYLPLEVCNIVAGQRCIKKLTDNQTSTMIKATARSAPDRQEEISRLVKSNSMVGGPDPYLKEFGIVVHNEMTELTGRVLPAPMLQYGGRNKTVATPNQGVWDMRGKQFYAGIEIKVWAVACFAPQKQCREDLLKSFTDQLRKISKDAGMPIQGQPCFCKYAQGADSVEPMFKHLKLTYVGLQLIVVILPGKTPVYAEVKRVGDTLLGMATQCVQVKNVVKTSPQTLSNLCLKINAKLGGINNVLVPHQRPSVFQQPVIFLGADVTHPPAGDGKKPSIAAVVGSMDGHPSRYCATVRVQTSRQETSQELLYSQEVIQDLTNMVRELLIQFYKSTRFKPTRIIYYRGGVSEGQMKQVAWPELIAIRKACISLEEDYRPGITYIVVQKRHHTRLFCADKTERVGKSGNVPAGTTVDSTITHPSEFDFYLCSHAGIQGTSRPSHYQVLWDDNCFTADELQLLTYQLCHTYVRCTRSVSIPAPAYYARLVAFRARYHLVDKDHDSAEGSHVSGQSNGRDPQALAKAVQIHHDTQHTMYFA.

The region spanning 152–271 (PIIEFMCEVL…LPLEVCNIVA (120 aa)) is the PAZ domain. The region spanning 442 to 753 (LIVVILPGKT…VAFRARYHLV (312 aa)) is the Piwi domain. The interval 758–779 (DSAEGSHVSGQSNGRDPQALAK) is disordered.

This sequence belongs to the argonaute family. Ago subfamily.

It localises to the cytoplasm. Its subcellular location is the P-body. Its function is as follows. Required for RNA-mediated gene silencing (RNAi). Binds to short RNAs such as microRNAs (miRNAs) and represses the translation of mRNAs which are complementary to them. Lacks endonuclease activity and does not appear to cleave target mRNAs. The polypeptide is Protein argonaute-4 (AGO4) (Gallus gallus (Chicken)).